Consider the following 503-residue polypeptide: ATP synthase subunit alpha (503 aa).

170–177 provides a ligand contact to ATP; it reads GDRKTGKT.

Belongs to the ATPase alpha/beta chains family. F-type ATPases have 2 components, CF(1) - the catalytic core - and CF(0) - the membrane proton channel. CF(1) has five subunits: alpha(3), beta(3), gamma(1), delta(1), epsilon(1). CF(0) has four main subunits: a(1), b(1), b'(1) and c(9-12).

Its subcellular location is the cellular thylakoid membrane. The enzyme catalyses ATP + H2O + 4 H(+)(in) = ADP + phosphate + 5 H(+)(out). Its function is as follows. Produces ATP from ADP in the presence of a proton gradient across the membrane. The alpha chain is a regulatory subunit. The protein is ATP synthase subunit alpha of Synechocystis sp. (strain ATCC 27184 / PCC 6803 / Kazusa).